The chain runs to 193 residues: Xanthine phosphoribosyltransferase (193 aa).

The xanthine site is built by leucine 20 and threonine 27. 128–132 is a binding site for 5-phospho-alpha-D-ribose 1-diphosphate; that stretch reads ANGQA. Lysine 156 serves as a coordination point for xanthine.

It belongs to the purine/pyrimidine phosphoribosyltransferase family. Xpt subfamily. Homodimer.

Its subcellular location is the cytoplasm. The enzyme catalyses XMP + diphosphate = xanthine + 5-phospho-alpha-D-ribose 1-diphosphate. The protein operates within purine metabolism; XMP biosynthesis via salvage pathway; XMP from xanthine: step 1/1. In terms of biological role, converts the preformed base xanthine, a product of nucleic acid breakdown, to xanthosine 5'-monophosphate (XMP), so it can be reused for RNA or DNA synthesis. The chain is Xanthine phosphoribosyltransferase from Streptococcus equi subsp. zooepidemicus (strain H70).